A 314-amino-acid chain; its full sequence is Ribosome production factor 2 homolog (314 aa).

The Brix domain occupies 28–238 (KKTLILHGTK…IRRNRLPNDS (211 aa)). The interval 238-314 (SLMKEAMRTS…VAKKMKVSSE (77 aa)) is disordered. Composition is skewed to basic and acidic residues over residues 239-249 (LMKEAMRTSKD) and 275-314 (QKLKEMKLFDKSKGSKRERKDAKLKHKEETVAKKMKVSSE).

It belongs to the RPF2 family.

The protein resides in the nucleus. It localises to the nucleolus. The sequence is that of Ribosome production factor 2 homolog from Arabidopsis thaliana (Mouse-ear cress).